Consider the following 640-residue polypeptide: Chaperone protein DnaK (640 aa).

The residue at position 198 (Thr-198) is a Phosphothreonine; by autocatalysis. The interval 600 to 640 is disordered; the sequence is KTQGAGAEGSEQPHGEQEAGGAAKGETVVDADFEEVKDDKK. Acidic residues predominate over residues 628-640; sequence VDADFEEVKDDKK.

The protein belongs to the heat shock protein 70 family.

Its function is as follows. Acts as a chaperone. This is Chaperone protein DnaK from Geobacter sp. (strain M21).